A 197-amino-acid polypeptide reads, in one-letter code: Small ribosomal subunit protein uS4B (197 aa).

Positions 88 to 151 (CRLDNIAYRI…RKNDEFADNF (64 aa)) constitute an S4 RNA-binding domain.

The protein belongs to the universal ribosomal protein uS4 family. Part of the 30S ribosomal subunit. Contacts protein S5. The interaction surface between S4 and S5 is involved in control of translational fidelity.

In terms of biological role, one of the primary rRNA binding proteins, it binds directly to 16S rRNA where it nucleates assembly of the body of the 30S subunit. Functionally, with S5 and S12 plays an important role in translational accuracy. This is Small ribosomal subunit protein uS4B from Clostridium botulinum (strain Langeland / NCTC 10281 / Type F).